Consider the following 228-residue polypeptide: Putative lipoprotein LprH (228 aa).

The signal sequence occupies residues 1-27 (MACLGRPGCRGWAGASLVLVVVLALAA). The N-palmitoyl cysteine moiety is linked to residue Cys-28. Cys-28 carries the S-diacylglycerol cysteine lipid modification. Residues 191-211 (GLAVVPHAVLVLSACGFKPGF) traverse the membrane as a helical segment.

It localises to the cell membrane. The sequence is that of Putative lipoprotein LprH (lprH) from Mycobacterium bovis (strain ATCC BAA-935 / AF2122/97).